Consider the following 121-residue polypeptide: Spermidine export protein MdtJ (121 aa).

Position 1 (Met-1) is a topological domain, cytoplasmic. The helical transmembrane segment at 2-22 (YIYWILLGLAVATEITGTLSM) threads the bilayer. Over 23–31 (KWASVSEGN) the chain is Periplasmic. The chain crosses the membrane as a helical span at residues 32 to 52 (GGFILMLVMISLSYIFLSFAV). Topologically, residues 53–54 (KK) are cytoplasmic. The chain crosses the membrane as a helical span at residues 55–75 (IALGVAYALWEGIGILFITLF). The Periplasmic segment spans residues 76 to 81 (SVLLFD). The helical transmembrane segment at 82–102 (ESLSLMKIAGLTTLVAGIVLI) threads the bilayer. The Cytoplasmic segment spans residues 103–121 (KSGTRKARKPELEVNHGAV).

The protein belongs to the drug/metabolite transporter (DMT) superfamily. Small multidrug resistance (SMR) (TC 2.A.7.1) family. MdtJ subfamily. As to quaternary structure, forms a complex with MdtI.

It is found in the cell inner membrane. In terms of biological role, catalyzes the excretion of spermidine. This is Spermidine export protein MdtJ (mdtJ) from Escherichia coli O6:H1 (strain CFT073 / ATCC 700928 / UPEC).